Here is a 345-residue protein sequence, read N- to C-terminus: Phosphoribosylformylglycinamidine cyclo-ligase (345 aa).

It belongs to the AIR synthase family.

The protein resides in the cytoplasm. The catalysed reaction is 2-formamido-N(1)-(5-O-phospho-beta-D-ribosyl)acetamidine + ATP = 5-amino-1-(5-phospho-beta-D-ribosyl)imidazole + ADP + phosphate + H(+). It participates in purine metabolism; IMP biosynthesis via de novo pathway; 5-amino-1-(5-phospho-D-ribosyl)imidazole from N(2)-formyl-N(1)-(5-phospho-D-ribosyl)glycinamide: step 2/2. This is Phosphoribosylformylglycinamidine cyclo-ligase from Shouchella clausii (strain KSM-K16) (Alkalihalobacillus clausii).